The primary structure comprises 874 residues: Alanine--tRNA ligase (874 aa).

4 residues coordinate Zn(2+): histidine 562, histidine 566, cysteine 664, and histidine 668.

Belongs to the class-II aminoacyl-tRNA synthetase family. Zn(2+) is required as a cofactor.

The protein resides in the cytoplasm. The catalysed reaction is tRNA(Ala) + L-alanine + ATP = L-alanyl-tRNA(Ala) + AMP + diphosphate. Catalyzes the attachment of alanine to tRNA(Ala) in a two-step reaction: alanine is first activated by ATP to form Ala-AMP and then transferred to the acceptor end of tRNA(Ala). Also edits incorrectly charged Ser-tRNA(Ala) and Gly-tRNA(Ala) via its editing domain. The protein is Alanine--tRNA ligase of Shewanella sp. (strain ANA-3).